Here is a 366-residue protein sequence, read N- to C-terminus: Pyruvate dehydrogenase E1 component subunit beta, mitochondrial (366 aa).

Residues 1–33 (MFSRLPTSLARNVARRAPTSFVRPSAAAAALRF) constitute a mitochondrion transit peptide. Position 95 (glutamate 95) interacts with thiamine diphosphate. K(+)-binding residues include alanine 196, isoleucine 197, aspartate 199, and asparagine 201.

In terms of assembly, pyruvate dehydrogenase (E1) is a tetramer of 2 alpha and 2 beta subunits. Eukaryotic pyruvate dehydrogenase (PDH) complexes are organized as a core consisting of the oligomeric dihydrolipoamide acetyl-transferase (E2), around which are arranged multiple copies of pyruvate dehydrogenase (E1), dihydrolipoamide dehydrogenase (E3) and protein X (E3BP) bound by non-covalent bonds. Thiamine diphosphate serves as cofactor.

The protein resides in the mitochondrion matrix. The enzyme catalyses N(6)-[(R)-lipoyl]-L-lysyl-[protein] + pyruvate + H(+) = N(6)-[(R)-S(8)-acetyldihydrolipoyl]-L-lysyl-[protein] + CO2. Functionally, the pyruvate dehydrogenase complex catalyzes the overall conversion of pyruvate to acetyl-CoA and CO(2). The chain is Pyruvate dehydrogenase E1 component subunit beta, mitochondrial (PDB1) from Saccharomyces cerevisiae (strain ATCC 204508 / S288c) (Baker's yeast).